A 148-amino-acid polypeptide reads, in one-letter code: MKALLVLGFLLLSASVQAKIYERCQFARTLKRNGMSGYYGVSLADWVCLAQHESNYNTQARNYNPGDQSTDYGIFQINSRYWCNDGKTPRAKNACGIPCSALLQDDITQAIQCAKRVVRDPQGIRAWVAWQRHCKNRDLSGYIRNCGV.

The signal sequence occupies residues 1 to 18 (MKALLVLGFLLLSASVQA). Positions 19-148 (KIYERCQFAR…LSGYIRNCGV (130 aa)) constitute a C-type lysozyme domain. 4 disulfides stabilise this stretch: cysteine 24–cysteine 146, cysteine 48–cysteine 134, cysteine 83–cysteine 99, and cysteine 95–cysteine 113. Residues glutamate 53 and aspartate 71 contribute to the active site.

Belongs to the glycosyl hydrolase 22 family. In terms of assembly, monomer. In terms of tissue distribution, expressed in lung, small intestine and spleen.

It localises to the secreted. It catalyses the reaction Hydrolysis of (1-&gt;4)-beta-linkages between N-acetylmuramic acid and N-acetyl-D-glucosamine residues in a peptidoglycan and between N-acetyl-D-glucosamine residues in chitodextrins.. Its function is as follows. Lysozymes have primarily a bacteriolytic function; those in tissues and body fluids are associated with the monocyte-macrophage system and enhance the activity of immunoagents. In the intestine they may also have a digestive function. This Rattus norvegicus (Rat) protein is Lysozyme C-1 (Lyz1).